An 809-amino-acid chain; its full sequence is Sucrose synthase 4 (809 aa).

The GT-B glycosyltransferase stretch occupies residues 275-753; the sequence is MIFNVVVVSP…GLQRIYEKYT (479 aa).

The protein belongs to the glycosyltransferase 1 family. Plant sucrose synthase subfamily. In terms of tissue distribution, predominantly expressed in the leaf tissues and in caryopses.

It catalyses the reaction an NDP-alpha-D-glucose + D-fructose = a ribonucleoside 5'-diphosphate + sucrose + H(+). Sucrose-cleaving enzyme that provides UDP-glucose and fructose for various metabolic pathways. The sequence is that of Sucrose synthase 4 (SUS4) from Oryza sativa subsp. japonica (Rice).